The following is a 435-amino-acid chain: Serine--tRNA ligase (435 aa).

241 to 243 (TAE) lines the L-serine pocket. 272–274 (RAE) provides a ligand contact to ATP. L-serine is bound at residue glutamate 295. 359–362 (EISS) is a binding site for ATP. An L-serine-binding site is contributed by serine 395.

Belongs to the class-II aminoacyl-tRNA synthetase family. Type-1 seryl-tRNA synthetase subfamily. Homodimer. The tRNA molecule binds across the dimer.

The protein resides in the cytoplasm. The enzyme catalyses tRNA(Ser) + L-serine + ATP = L-seryl-tRNA(Ser) + AMP + diphosphate + H(+). It carries out the reaction tRNA(Sec) + L-serine + ATP = L-seryl-tRNA(Sec) + AMP + diphosphate + H(+). The protein operates within aminoacyl-tRNA biosynthesis; selenocysteinyl-tRNA(Sec) biosynthesis; L-seryl-tRNA(Sec) from L-serine and tRNA(Sec): step 1/1. In terms of biological role, catalyzes the attachment of serine to tRNA(Ser). Is also able to aminoacylate tRNA(Sec) with serine, to form the misacylated tRNA L-seryl-tRNA(Sec), which will be further converted into selenocysteinyl-tRNA(Sec). In Haemophilus ducreyi (strain 35000HP / ATCC 700724), this protein is Serine--tRNA ligase.